We begin with the raw amino-acid sequence, 671 residues long: UvrABC system protein B (671 aa).

Positions Glu-26–Arg-414 constitute a Helicase ATP-binding domain. Gly-39–Thr-46 is an ATP binding site. The short motif at Tyr-92–Val-115 is the Beta-hairpin element. One can recognise a Helicase C-terminal domain in the interval Gln-431 to Ile-593. Residues Asp-631 to Gln-666 form the UVR domain.

The protein belongs to the UvrB family. In terms of assembly, forms a heterotetramer with UvrA during the search for lesions. Interacts with UvrC in an incision complex.

It is found in the cytoplasm. The UvrABC repair system catalyzes the recognition and processing of DNA lesions. A damage recognition complex composed of 2 UvrA and 2 UvrB subunits scans DNA for abnormalities. Upon binding of the UvrA(2)B(2) complex to a putative damaged site, the DNA wraps around one UvrB monomer. DNA wrap is dependent on ATP binding by UvrB and probably causes local melting of the DNA helix, facilitating insertion of UvrB beta-hairpin between the DNA strands. Then UvrB probes one DNA strand for the presence of a lesion. If a lesion is found the UvrA subunits dissociate and the UvrB-DNA preincision complex is formed. This complex is subsequently bound by UvrC and the second UvrB is released. If no lesion is found, the DNA wraps around the other UvrB subunit that will check the other stand for damage. The protein is UvrABC system protein B of Yersinia pestis.